A 362-amino-acid chain; its full sequence is Protein mom-2 (362 aa).

An N-terminal signal peptide occupies residues 1-24 (MHINTPVLLAIIYFLVFAPKSADA). 5 disulfide bridges follow: Cys80/Cys91, Cys129/Cys137, Cys139/Cys167, Cys217/Cys231, and Cys219/Cys226. Asn90 is a glycosylation site (N-linked (GlcNAc...) asparagine). Residue Ser223 is the site of O-palmitoleoyl serine; by mom-1 attachment. A disordered region spans residues 263–282 (TVRSSPSAGSSGRSERFARN). The span at 265-274 (RSSPSAGSSG) shows a compositional bias: low complexity. 6 cysteine pairs are disulfide-bonded: Cys304-Cys322, Cys313-Cys317, Cys321-Cys361, Cys337-Cys352, Cys339-Cys349, and Cys344-Cys345.

This sequence belongs to the Wnt family. Palmitoleoylation is required for efficient binding to frizzled receptors. Depalmitoleoylation leads to Wnt signaling pathway inhibition. Expressed by anchor cell and vulva precursor cell descendants P5.ppa, P5.ppp, P7.paa and P7.pap. Expressed in the tail and weakly expressed in the vulva and body wall muscles.

It is found in the secreted. It localises to the extracellular space. The protein localises to the extracellular matrix. In terms of biological role, ligand for members of the frizzled family of seven transmembrane receptors. Required in embryonic development for endoderm specification and the correct positioning and orientation of the mitotic spindles and division planes in blastomere cells. Involved in cleavage axis determination. Binds to receptor tyrosine kinase cam-1. Together with wnt ligand lin-44, plays a role in controlling vulva precursor cell P7.p lineage orientation during vulva development, probably by acting as a ligand for tyrosine kinase receptor lin-18. May act redundantly with other Wnt ligands such as cwn-1 and cwn-2 to control seam cell polarity. The protein is Protein mom-2 (mom-2) of Caenorhabditis elegans.